Consider the following 199-residue polypeptide: Large ribosomal subunit protein bL17 (199 aa).

The segment at 123-199 is disordered; it reads DEANRARRAA…EESEAKDDTK (77 aa). The segment covering 137 to 152 has biased composition (basic and acidic residues); that stretch reads KADERADEKADEKAEE. Acidic residues predominate over residues 153–199; that stretch reads TVEETTEAPAEESTEAAAEETVEETTEAPAEESTEAAEESEAKDDTK.

It belongs to the bacterial ribosomal protein bL17 family. In terms of assembly, part of the 50S ribosomal subunit. Contacts protein L32.

The protein is Large ribosomal subunit protein bL17 of Mycolicibacterium smegmatis (strain ATCC 700084 / mc(2)155) (Mycobacterium smegmatis).